Consider the following 260-residue polypeptide: Thrombin-like enzyme 1 (260 aa).

Residues Met-1–Ala-18 form the signal peptide. A propeptide spanning residues Gln-19 to Leu-24 is cleaved from the precursor. The 227-residue stretch at Val-25 to Ala-251 folds into the Peptidase S1 domain. Intrachain disulfides connect Cys-31–Cys-165, Cys-52–Cys-68, Cys-102–Cys-258, Cys-144–Cys-212, Cys-176–Cys-191, and Cys-202–Cys-227. The Charge relay system role is filled by His-67. N-linked (GlcNAc...) asparagine glycosylation occurs at Asn-105. The Charge relay system role is filled by Asp-112. 2 N-linked (GlcNAc...) asparagine glycosylation sites follow: Asn-156 and Asn-172. Ser-206 serves as the catalytic Charge relay system. Asn-253 carries an N-linked (GlcNAc...) asparagine glycan.

Belongs to the peptidase S1 family. Snake venom subfamily. In terms of assembly, monomer. In terms of tissue distribution, expressed by the venom gland.

It localises to the secreted. Its function is as follows. Thrombin-like snake venom serine protease. This Trimeresurus albolabris (White-lipped pit viper) protein is Thrombin-like enzyme 1.